Consider the following 393-residue polypeptide: Messenger RNA-binding inhibitor of apoptosis 1 (393 aa).

The tract at residues 12–76 is KH 1-like; sequence ELYIPQKMKA…EKILRDVWRK (65 aa). The tract at residues 79-157 is KH 2-like; sequence VQIMIREAAL…MMIECLTEHF (79 aa). The interval 259-322 is KH 3-like; sequence EKIKQWIPTT…NKEQCQEARN (64 aa). A disordered region spans residues 328–393; that stretch reads MQSHQDKPAS…LTPRKLSPSD (66 aa). Residues 345–359 are compositionally biased toward low complexity; it reads STPGSPFTSDSSSTT.

May interact with wago-4. Expressed throughout the germline and in oocytes (at protein level).

It localises to the cytoplasm. The protein localises to the perinuclear region. Functionally, RNA-binding protein which binds to its own mRNA and target mRNAs to negatively regulate gene expression to modulate apoptosis and differentiation in the germline. Negatively regulates the expression of the argonaute protein wago-4, and may thus play a role in RNA-mediated gene silencing (RNAi) in the germline. This Caenorhabditis elegans protein is Messenger RNA-binding inhibitor of apoptosis 1.